Here is a 595-residue protein sequence, read N- to C-terminus: Probable carotenoid cleavage dioxygenase 4, chloroplastic (595 aa).

Residues 1 to 34 (MDSVSSSSFLSSTFSLHHSLLRRRSSSPTLLRIN) constitute a chloroplast transit peptide. The interval 41–74 (RSPITNPSDNNDRRNKPKTLHNRTNHTLVSSPPK) is disordered. The segment covering 55 to 64 (NKPKTLHNRT) has biased composition (basic residues). Residues H287, H336, H404, and H583 each contribute to the Fe cation site.

Belongs to the carotenoid oxygenase family. As to quaternary structure, interacts with VAR3. Interacts with PGM48. Requires Fe(2+) as cofactor. Mostly expressed in flowers (e.g. sepals and petals), siliques, seeds, leaves and cotyledons.

The protein localises to the plastid. Its subcellular location is the chloroplast. The protein resides in the plastoglobule. In terms of biological role, may be involved in carotenoid cleavage. The sequence is that of Probable carotenoid cleavage dioxygenase 4, chloroplastic (CCD4) from Arabidopsis thaliana (Mouse-ear cress).